Reading from the N-terminus, the 248-residue chain is Phosphoadenosine 5'-phosphosulfate reductase (248 aa).

Cys-239 functions as the Nucleophile; cysteine thiosulfonate intermediate in the catalytic mechanism.

Belongs to the PAPS reductase family. CysH subfamily.

Its subcellular location is the cytoplasm. The enzyme catalyses [thioredoxin]-disulfide + sulfite + adenosine 3',5'-bisphosphate + 2 H(+) = [thioredoxin]-dithiol + 3'-phosphoadenylyl sulfate. The protein operates within sulfur metabolism; hydrogen sulfide biosynthesis; sulfite from sulfate: step 3/3. Functionally, catalyzes the formation of sulfite from phosphoadenosine 5'-phosphosulfate (PAPS) using thioredoxin as an electron donor. The polypeptide is Phosphoadenosine 5'-phosphosulfate reductase (Alteromonas mediterranea (strain DSM 17117 / CIP 110805 / LMG 28347 / Deep ecotype)).